Consider the following 100-residue polypeptide: MPRIKSAIKRVKIAERNRLRNKATKAMVRALMKKVTSLSSAYAANPQPETLQEIQAAMSAAFSRIDKAAKTGVLHKNTAARRKARLSRIVQRSLAATSAS.

Belongs to the bacterial ribosomal protein bS20 family.

In terms of biological role, binds directly to 16S ribosomal RNA. The sequence is that of Small ribosomal subunit protein bS20 from Synechococcus sp. (strain JA-3-3Ab) (Cyanobacteria bacterium Yellowstone A-Prime).